The following is a 501-amino-acid chain: Lysine--tRNA ligase (501 aa).

Positions 402 and 409 each coordinate Mg(2+).

The protein belongs to the class-II aminoacyl-tRNA synthetase family. As to quaternary structure, homodimer. Mg(2+) serves as cofactor.

The protein localises to the cytoplasm. The enzyme catalyses tRNA(Lys) + L-lysine + ATP = L-lysyl-tRNA(Lys) + AMP + diphosphate. In Helicobacter pylori (strain ATCC 700392 / 26695) (Campylobacter pylori), this protein is Lysine--tRNA ligase (lysS).